A 106-amino-acid polypeptide reads, in one-letter code: Large ribosomal subunit protein bL21 (106 aa).

This sequence belongs to the bacterial ribosomal protein bL21 family. Part of the 50S ribosomal subunit. Contacts protein L20.

Its function is as follows. This protein binds to 23S rRNA in the presence of protein L20. In Xylella fastidiosa (strain 9a5c), this protein is Large ribosomal subunit protein bL21.